The chain runs to 143 residues: Polyadenylate-binding protein-interacting protein 2 (143 aa).

The PAM2-like signature appears at 11–21; sequence TLNPNAPVFDP.

The protein is Polyadenylate-binding protein-interacting protein 2 (CID2) of Arabidopsis thaliana (Mouse-ear cress).